Consider the following 160-residue polypeptide: SsrA-binding protein (160 aa).

This sequence belongs to the SmpB family.

The protein localises to the cytoplasm. Required for rescue of stalled ribosomes mediated by trans-translation. Binds to transfer-messenger RNA (tmRNA), required for stable association of tmRNA with ribosomes. tmRNA and SmpB together mimic tRNA shape, replacing the anticodon stem-loop with SmpB. tmRNA is encoded by the ssrA gene; the 2 termini fold to resemble tRNA(Ala) and it encodes a 'tag peptide', a short internal open reading frame. During trans-translation Ala-aminoacylated tmRNA acts like a tRNA, entering the A-site of stalled ribosomes, displacing the stalled mRNA. The ribosome then switches to translate the ORF on the tmRNA; the nascent peptide is terminated with the 'tag peptide' encoded by the tmRNA and targeted for degradation. The ribosome is freed to recommence translation, which seems to be the essential function of trans-translation. The sequence is that of SsrA-binding protein from Cronobacter sakazakii (strain ATCC BAA-894) (Enterobacter sakazakii).